The chain runs to 366 residues: Peptide chain release factor 2 (366 aa).

Residue glutamine 251 is modified to N5-methylglutamine.

It belongs to the prokaryotic/mitochondrial release factor family. In terms of processing, methylated by PrmC. Methylation increases the termination efficiency of RF2.

The protein resides in the cytoplasm. Peptide chain release factor 2 directs the termination of translation in response to the peptide chain termination codons UGA and UAA. The polypeptide is Peptide chain release factor 2 (prfB) (Listeria innocua serovar 6a (strain ATCC BAA-680 / CLIP 11262)).